We begin with the raw amino-acid sequence, 415 residues long: Probable peptidoglycan glycosyltransferase FtsW (415 aa).

11 consecutive transmembrane segments (helical) span residues 31 to 51, 63 to 83, 97 to 117, 133 to 153, 162 to 182, 185 to 205, 206 to 226, 245 to 265, 285 to 305, 326 to 346, and 361 to 381; these read PILMVAVLALLAWGLVMVTSA, FFFVIRQTIAVVIGASITVWL, LWILIASLLLLLVVLLPGIGH, IQVSEFARLGLIIWMAGYIAT, ITGMLGPGVVIFAASLLLLLQ, FGTTAVLAATLFAMAWLARAQ, WQMMVGSTLVMGVLGVFVVLS, FGHGYQLANALIAIGTGGVWG, FIFAVLAEELGLIGVIALIGL, IAGAALAWGISVWIGMQALIN, and LPLMSYGGSAMIVALISLGFL.

Belongs to the SEDS family. FtsW subfamily.

The protein resides in the cell inner membrane. It carries out the reaction [GlcNAc-(1-&gt;4)-Mur2Ac(oyl-L-Ala-gamma-D-Glu-L-Lys-D-Ala-D-Ala)](n)-di-trans,octa-cis-undecaprenyl diphosphate + beta-D-GlcNAc-(1-&gt;4)-Mur2Ac(oyl-L-Ala-gamma-D-Glu-L-Lys-D-Ala-D-Ala)-di-trans,octa-cis-undecaprenyl diphosphate = [GlcNAc-(1-&gt;4)-Mur2Ac(oyl-L-Ala-gamma-D-Glu-L-Lys-D-Ala-D-Ala)](n+1)-di-trans,octa-cis-undecaprenyl diphosphate + di-trans,octa-cis-undecaprenyl diphosphate + H(+). Its pathway is cell wall biogenesis; peptidoglycan biosynthesis. Peptidoglycan polymerase that is essential for cell division. In Halothiobacillus neapolitanus (strain ATCC 23641 / c2) (Thiobacillus neapolitanus), this protein is Probable peptidoglycan glycosyltransferase FtsW.